The sequence spans 791 residues: Ribosome biogenesis protein ERB1 (791 aa).

Over residues 1–12 the composition is skewed to polar residues; that stretch reads MARKNSSLNGSE. 2 disordered regions span residues 1–60 and 68–87; these read MARK…DDSD and AEEE…SEEG. Composition is skewed to acidic residues over residues 25-60 and 69-87; these read ESEL…DDSD and EEEN…SEEG. The tract at residues 254–372 is required for interaction with NOP7; the sequence is RFVPSKHEAK…LRKVPGYSES (119 aa). The tract at residues 372–408 is required for interaction with YTM1; sequence SVRERFERSLDLYLAPRVRKNKLNIDPESLIPELPST. WD repeat units lie at residues 424 to 463, 472 to 512, 576 to 618, 621 to 659, 662 to 701, 705 to 744, and 760 to 791; these read GHKG…EVYQ, NNDD…FEIE, TCRK…TQSP, KSKG…LIKK, PGAR…TPYK, YHEK…DLMK, and VNSL…LWTT.

Belongs to the WD repeat BOP1/ERB1 family. As to quaternary structure, component of the NOP7 complex, composed of ERB1, NOP7 and YTM1. The complex is held together by ERB1, which interacts with NOP7 via its N-terminal domain and with YTM1 via a high-affinity interaction between the seven-bladed beta-propeller domains of the 2 proteins. The NOP7 complex associates with the 66S pre-ribosome.

It localises to the nucleus. It is found in the nucleolus. The protein resides in the nucleoplasm. Component of the NOP7 complex, which is required for maturation of the 25S and 5.8S ribosomal RNAs and formation of the 60S ribosome. This is Ribosome biogenesis protein ERB1 from Kluyveromyces lactis (strain ATCC 8585 / CBS 2359 / DSM 70799 / NBRC 1267 / NRRL Y-1140 / WM37) (Yeast).